Consider the following 433-residue polypeptide: Enolase (433 aa).

Gln-163 is a binding site for (2R)-2-phosphoglycerate. Residue Glu-205 is the Proton donor of the active site. Positions 242, 285, and 312 each coordinate Mg(2+). Lys-337, Arg-366, Ser-367, and Lys-388 together coordinate (2R)-2-phosphoglycerate. Lys-337 (proton acceptor) is an active-site residue.

This sequence belongs to the enolase family. Mg(2+) is required as a cofactor.

The protein localises to the cytoplasm. The protein resides in the secreted. Its subcellular location is the cell surface. It carries out the reaction (2R)-2-phosphoglycerate = phosphoenolpyruvate + H2O. Its pathway is carbohydrate degradation; glycolysis; pyruvate from D-glyceraldehyde 3-phosphate: step 4/5. In terms of biological role, catalyzes the reversible conversion of 2-phosphoglycerate (2-PG) into phosphoenolpyruvate (PEP). It is essential for the degradation of carbohydrates via glycolysis. The protein is Enolase of Lawsonia intracellularis (strain PHE/MN1-00).